We begin with the raw amino-acid sequence, 311 residues long: Peptide methionine sulfoxide reductase MsrA/MsrB (311 aa).

The peptide methionine sulfoxide reductase A stretch occupies residues 1–155 (MAEIYLAGGC…PGGYCHINVN (155 aa)). The active site involves Cys10. A MsrB domain is found at 172-295 (DAELKEQLTQ…NSAALRFIPK (124 aa)). Cys284 (nucleophile) is an active-site residue.

The protein in the N-terminal section; belongs to the MsrA Met sulfoxide reductase family. This sequence in the C-terminal section; belongs to the MsrB Met sulfoxide reductase family.

It catalyses the reaction L-methionyl-[protein] + [thioredoxin]-disulfide + H2O = L-methionyl-(S)-S-oxide-[protein] + [thioredoxin]-dithiol. It carries out the reaction [thioredoxin]-disulfide + L-methionine + H2O = L-methionine (S)-S-oxide + [thioredoxin]-dithiol. The catalysed reaction is L-methionyl-[protein] + [thioredoxin]-disulfide + H2O = L-methionyl-(R)-S-oxide-[protein] + [thioredoxin]-dithiol. Its function is as follows. Has an important function as a repair enzyme for proteins that have been inactivated by oxidation. Catalyzes the reversible oxidation-reduction of methionine sulfoxide in proteins to methionine. Involved in protection against oxidative stress when the bacterium enters the host bloodstream and required for maximal growth under aerobic and anaerobic conditions. This chain is Peptide methionine sulfoxide reductase MsrA/MsrB (msrAB), found in Streptococcus gordonii (strain Challis / ATCC 35105 / BCRC 15272 / CH1 / DL1 / V288).